An 820-amino-acid polypeptide reads, in one-letter code: Probable ATP-dependent RNA helicase DDX23 (820 aa).

The segment covering 1–42 (MAGELADKKDRDASPSKEERKRSRTPDRERDRDRDRKSSPSK) has biased composition (basic and acidic residues). The segment at 1 to 244 (MAGELADKKD…QKIREEKDKS (244 aa)) is disordered. Phosphoserine is present on residues serine 14 and serine 16. A compositionally biased stretch (basic residues) spans 43 to 65 (DRKRHRSRDRRRGGSRSRSRSRS). A compositionally biased stretch (basic and acidic residues) spans 66-105 (KSAERERRHKERERDKERDRNKKDRDRDKDGHRRDKDRKR). A phosphoserine mark is found at serine 107 and serine 109. 3 stretches are compositionally biased toward basic and acidic residues: residues 112–137 (RGKD…DKKP), 147–226 (LLAK…RETN), and 233–244 (GRQKIREEKDKS). The Q motif signature appears at 391-419 (RSWKDSSLPPHILEVIDKCGYKEPTPIQR). The 206-residue stretch at 422-627 (IPIGLQNRDI…RSYLRRPAVV (206 aa)) folds into the Helicase ATP-binding domain. Position 435 to 442 (435 to 442 (AETGSGKT)) interacts with ATP. The DEAD box motif lies at 549–552 (DEAD). Residues 651-799 (KRKKLLAILE…SCPPELANHP (149 aa)) form the Helicase C-terminal domain. Glycyl lysine isopeptide (Lys-Gly) (interchain with G-Cter in SUMO2) cross-links involve residues lysine 686 and lysine 811.

The protein belongs to the DEAD box helicase family. DDX23/PRP28 subfamily. As to quaternary structure, the phosphorylated form (by SRPK2) is a component of the U4/U6-U5 tri-snRNP complex composed of the U4, U6 and U5 snRNAs and at least PRPF3, PRPF4, PRPF6, PRPF8, PRPF31, SNRNP200, TXNL4A, WDR57, SNRNP40, DDX23, CD2BP2, PPIH, SNU13, EFTUD2, SART1 and USP39. Identified in the spliceosome C complex. Interacts with ERBB4. Interacts with ERCC6. In terms of processing, in vitro phosphorylated by CLK1 and U1 snRNP-associated protein kinase. Phosphorylated by SRPK2 and this phosphorylation is required for its association with the tri-snRNP (U4/U6-U5 tri-small nuclear ribonucleoproteins) and subsequent spliceosomal B complex formation. May be phosphorylated by SRPK2 on Ser residues in the SR domain; the phosphorylation is required for the removal of inappropriate R-loops during transcription.

Its subcellular location is the nucleus. The protein localises to the chromosome. It carries out the reaction ATP + H2O = ADP + phosphate + H(+). In terms of biological role, involved in pre-mRNA splicing and its phosphorylated form (by SRPK2) is required for spliceosomal B complex formation. Independently of its spliceosome formation function, required for the suppression of incorrect R-loops formed during transcription; R-loops are composed of a DNA:RNA hybrid and the associated non-template single-stranded DNA. The sequence is that of Probable ATP-dependent RNA helicase DDX23 from Homo sapiens (Human).